Consider the following 314-residue polypeptide: Putative SET domain-containing protein L222 (314 aa).

Residues 23 to 172 (EYIQVIYQNP…ANTEITISYG (150 aa)) enclose the SET domain.

The protein belongs to the class V-like SAM-binding methyltransferase superfamily.

This Acanthamoeba polyphaga mimivirus (APMV) protein is Putative SET domain-containing protein L222.